Consider the following 500-residue polypeptide: Protein-cysteine N-palmitoyltransferase Rasp (500 aa).

The next 10 membrane-spanning stretches (helical) occupy residues 15-35, 73-93, 105-125, 134-154, 206-226, 243-263, 293-313, 372-392, 429-449, and 461-481; these read IFVY…KIYG, GDFI…QGFI, FIGV…MVLL, IVSL…WILC, SLVQ…GPII, LGFV…QCAL, FMGQ…IAFA, LTFA…IWSI, LYAM…VYFI, and GAYL…YCFF. His381 is an active-site residue.

It belongs to the membrane-bound acyltransferase family. HHAT subfamily.

The protein resides in the membrane. It carries out the reaction N-terminal L-cysteinyl-[protein] + hexadecanoyl-CoA = N-terminal N-hexadecanoyl-L-cysteinyl-[protein] + CoA + H(+). The catalysed reaction is N-terminal L-cysteinyl-[protein]-C-terminal glycyl cholesterol ester + hexadecanoyl-CoA = N-terminal N-hexadecanoyl-L-cysteinyl-[protein]-C-terminal glycyl cholesterol ester + CoA + H(+). In terms of biological role, required in hedgehog (hh) expressing cells for production of appropriate signaling activity in embryos and in the imaginal precursors of adult tissues. Acts within the secretory pathway to catalyze N-terminal palmitoylation of Hh; this lipid modification is required for the embryonic and larval patterning activities of the Hh signal. Not required for Wg signaling. This is Protein-cysteine N-palmitoyltransferase Rasp (rasp) from Drosophila melanogaster (Fruit fly).